Reading from the N-terminus, the 476-residue chain is Aspartyl/glutamyl-tRNA(Asn/Gln) amidotransferase subunit B (476 aa).

This sequence belongs to the GatB/GatE family. GatB subfamily. Heterotrimer of A, B and C subunits.

It catalyses the reaction L-glutamyl-tRNA(Gln) + L-glutamine + ATP + H2O = L-glutaminyl-tRNA(Gln) + L-glutamate + ADP + phosphate + H(+). It carries out the reaction L-aspartyl-tRNA(Asn) + L-glutamine + ATP + H2O = L-asparaginyl-tRNA(Asn) + L-glutamate + ADP + phosphate + 2 H(+). Functionally, allows the formation of correctly charged Asn-tRNA(Asn) or Gln-tRNA(Gln) through the transamidation of misacylated Asp-tRNA(Asn) or Glu-tRNA(Gln) in organisms which lack either or both of asparaginyl-tRNA or glutaminyl-tRNA synthetases. The reaction takes place in the presence of glutamine and ATP through an activated phospho-Asp-tRNA(Asn) or phospho-Glu-tRNA(Gln). The chain is Aspartyl/glutamyl-tRNA(Asn/Gln) amidotransferase subunit B from Bacillus licheniformis (strain ATCC 14580 / DSM 13 / JCM 2505 / CCUG 7422 / NBRC 12200 / NCIMB 9375 / NCTC 10341 / NRRL NRS-1264 / Gibson 46).